The chain runs to 532 residues: CTP synthase (532 aa).

The tract at residues 1–267 (MAKFVFVTGG…HGLVLDQLQI (267 aa)) is amidoligase domain. Serine 13 contributes to the CTP binding site. Serine 13 contacts UTP. 14–19 (GLGKGI) serves as a coordination point for ATP. Tyrosine 54 lines the L-glutamine pocket. Position 71 (aspartate 71) interacts with ATP. 2 residues coordinate Mg(2+): aspartate 71 and glutamate 141. Residues 148–150 (DIE), 188–193 (KTKPIQ), and lysine 224 each bind CTP. UTP contacts are provided by residues 188 to 193 (KTKPIQ) and lysine 224. The 241-residue stretch at 292–532 (EVTFVGKYIE…GFVEAIVNNK (241 aa)) folds into the Glutamine amidotransferase type-1 domain. Glycine 354 lines the L-glutamine pocket. Cysteine 381 serves as the catalytic Nucleophile; for glutamine hydrolysis. L-glutamine contacts are provided by residues 382–385 (LGMQ), glutamate 405, and arginine 462. Residues histidine 507 and glutamate 509 contribute to the active site.

It belongs to the CTP synthase family. As to quaternary structure, homotetramer.

It carries out the reaction UTP + L-glutamine + ATP + H2O = CTP + L-glutamate + ADP + phosphate + 2 H(+). The catalysed reaction is L-glutamine + H2O = L-glutamate + NH4(+). The enzyme catalyses UTP + NH4(+) + ATP = CTP + ADP + phosphate + 2 H(+). It functions in the pathway pyrimidine metabolism; CTP biosynthesis via de novo pathway; CTP from UDP: step 2/2. Its activity is regulated as follows. Allosterically activated by GTP, when glutamine is the substrate; GTP has no effect on the reaction when ammonia is the substrate. The allosteric effector GTP functions by stabilizing the protein conformation that binds the tetrahedral intermediate(s) formed during glutamine hydrolysis. Inhibited by the product CTP, via allosteric rather than competitive inhibition. Its function is as follows. Catalyzes the ATP-dependent amination of UTP to CTP with either L-glutamine or ammonia as the source of nitrogen. Regulates intracellular CTP levels through interactions with the four ribonucleotide triphosphates. The polypeptide is CTP synthase (Mesoplasma florum (strain ATCC 33453 / NBRC 100688 / NCTC 11704 / L1) (Acholeplasma florum)).